The primary structure comprises 88 residues: Small ribosomal subunit protein uS17 (88 aa).

This sequence belongs to the universal ribosomal protein uS17 family. Part of the 30S ribosomal subunit.

In terms of biological role, one of the primary rRNA binding proteins, it binds specifically to the 5'-end of 16S ribosomal RNA. The sequence is that of Small ribosomal subunit protein uS17 from Lactobacillus gasseri (strain ATCC 33323 / DSM 20243 / BCRC 14619 / CIP 102991 / JCM 1131 / KCTC 3163 / NCIMB 11718 / NCTC 13722 / AM63).